A 354-amino-acid chain; its full sequence is Chorismate synthase (354 aa).

NADP(+) is bound at residue R46. FMN contacts are provided by residues 123–125 (RSS), 239–240 (NA), G284, 299–303 (KPVAT), and R325.

Belongs to the chorismate synthase family. Homotetramer. The cofactor is FMNH2.

The catalysed reaction is 5-O-(1-carboxyvinyl)-3-phosphoshikimate = chorismate + phosphate. The protein operates within metabolic intermediate biosynthesis; chorismate biosynthesis; chorismate from D-erythrose 4-phosphate and phosphoenolpyruvate: step 7/7. Functionally, catalyzes the anti-1,4-elimination of the C-3 phosphate and the C-6 proR hydrogen from 5-enolpyruvylshikimate-3-phosphate (EPSP) to yield chorismate, which is the branch point compound that serves as the starting substrate for the three terminal pathways of aromatic amino acid biosynthesis. This reaction introduces a second double bond into the aromatic ring system. In Azobacteroides pseudotrichonymphae genomovar. CFP2, this protein is Chorismate synthase.